Consider the following 615-residue polypeptide: UvrABC system protein C (615 aa).

The region spanning 12–91 (EKPGVYIMKD…IKKYKPKYNV (80 aa)) is the GIY-YIG domain. Positions 203-238 (DWLIQKLKEDMKKAAEELRFEEAARIRDQIFAIERT) constitute a UVR domain.

It belongs to the UvrC family. Interacts with UvrB in an incision complex.

The protein resides in the cytoplasm. The UvrABC repair system catalyzes the recognition and processing of DNA lesions. UvrC both incises the 5' and 3' sides of the lesion. The N-terminal half is responsible for the 3' incision and the C-terminal half is responsible for the 5' incision. This is UvrABC system protein C from Thermoanaerobacter sp. (strain X514).